The sequence spans 158 residues: Ribonuclease H (158 aa).

Residues 3–144 (ELKLIHIFTD…CDQLARAAAE (142 aa)) enclose the RNase H type-1 domain. Mg(2+) is bound by residues D12, E50, D72, and D136. The disordered stretch occupies residues 137–158 (QLARAAAEASPTQVDEGYQPES).

The protein belongs to the RNase H family. As to quaternary structure, monomer. It depends on Mg(2+) as a cofactor.

The protein localises to the cytoplasm. The catalysed reaction is Endonucleolytic cleavage to 5'-phosphomonoester.. Functionally, endonuclease that specifically degrades the RNA of RNA-DNA hybrids. The chain is Ribonuclease H from Shewanella sp. (strain ANA-3).